The following is a 314-amino-acid chain: Olfactory receptor 1E1 (314 aa).

Residues Met1–Asn25 lie on the Extracellular side of the membrane. Asn5 carries N-linked (GlcNAc...) asparagine glycosylation. The chain crosses the membrane as a helical span at residues Leu26–Ile49. Topologically, residues Arg50–Thr57 are cytoplasmic. Residues Pro58–Pro79 form a helical membrane-spanning segment. At Lys80–Gln100 the chain is on the extracellular side. Cys97 and Cys189 form a disulfide bridge. Residues Met101–Tyr120 form a helical membrane-spanning segment. At Asp121–Met139 the chain is on the cytoplasmic side. Residues Leu140–Leu158 traverse the membrane as a helical segment. Residues His159–Asn195 are Extracellular-facing. A helical membrane pass occupies residues Glu196 to Ala219. At Arg220–Lys236 the chain is on the cytoplasmic side. The helical transmembrane segment at Ala237–Tyr259 threads the bilayer. The Extracellular portion of the chain corresponds to Leu260–Thr272. A helical membrane pass occupies residues Val273–Leu292. The Cytoplasmic portion of the chain corresponds to Arg293 to Leu314.

This sequence belongs to the G-protein coupled receptor 1 family.

The protein resides in the cell membrane. In terms of biological role, odorant receptor. The sequence is that of Olfactory receptor 1E1 (OR1E1) from Gorilla gorilla gorilla (Western lowland gorilla).